The sequence spans 300 residues: Probable alpha-L-glutamate ligase (300 aa).

Residues Leu104 to Glu287 form the ATP-grasp domain. ATP is bound by residues Lys141, Glu178–Tyr179, Asp187, and Arg211–Asn213. The Mg(2+) site is built by Asp248, Glu260, and Asn262. The Mn(2+) site is built by Asp248, Glu260, and Asn262.

The protein belongs to the RimK family. Mg(2+) serves as cofactor. It depends on Mn(2+) as a cofactor.

This is Probable alpha-L-glutamate ligase from Enterobacter sp. (strain 638).